The primary structure comprises 179 residues: Large ribosomal subunit protein uL6 (179 aa).

It belongs to the universal ribosomal protein uL6 family. Part of the 50S ribosomal subunit.

Its function is as follows. This protein binds to the 23S rRNA, and is important in its secondary structure. It is located near the subunit interface in the base of the L7/L12 stalk, and near the tRNA binding site of the peptidyltransferase center. The chain is Large ribosomal subunit protein uL6 from Buchnera aphidicola subsp. Baizongia pistaciae (strain Bp).